Consider the following 137-residue polypeptide: Large ribosomal subunit protein uL16 (137 aa).

Belongs to the universal ribosomal protein uL16 family. Part of the 50S ribosomal subunit.

Functionally, binds 23S rRNA and is also seen to make contacts with the A and possibly P site tRNAs. This Thioalkalivibrio sulfidiphilus (strain HL-EbGR7) protein is Large ribosomal subunit protein uL16.